The primary structure comprises 1117 residues: MDLLSGTHIFAVLLACIVFQSGAQEKNYTIREEMPENVLIGDLLKDLNLSLIPDRSLTTPMQFKLVYKTGDVPLIRIEEGTGEIFTTGARIDREKLCAGIVVDAHCFYEVEVAVLPDEIFRLVKIRFLIEDINDNAPLFPATVINISIPENSAINSRYALPATIDPDTGINGVQNYHLIKGQSIFGLDVIETPEGEKMPQLIVQKELDREEKDTYVMKIKVEDGGFPQRSSTAILQVSVADTNDNRPVFKENEIEVSIPENAPVGSSVTQLHATDADIGENAKIHFYFSNLISNMAKKLFHLNSTTGLITIKEPLDREESPNHKLLVLASDGGLTPARAMVLVNVTDINDNIPSIDIRYIINPINGTVVLSENAPLNTKIALITVTDKDADHNGWVSCFTDHEVPFRLRPVFSNQFLLETAAYLDYESTREYAIKLLAADAGKPPLNQSSMLLIKVKDENDNAPVFTQPFLSLSVPENNSPGTQLTKISAMDADSGRNAEINYLLGFDAPSEFNLDHRTGILTAVKKLDREKQEKYSFTVLAKDNGMPPLMTNATVLVTVLDQNDNSPVFTHNEYNFYVPENLPRHGTVGLITVTDPDYGENSAVILSILDANDDFTIDPQTGVIQPNISFDREKQESYTFYVKAEDGGRISRSSTAKVTINVVDVNDNKPVFVVPSSNYSFELVPPSTNPGTVVFTVVAIDNDTGMNAELRYSMVGGNTKGLFIIDQTSGNITLKEKCVFADLGLHRLVVKAKDLGQPDSLFNVVNVNLFVNESVTNATLIYELVRKNIETPVTQNIETTDASSPSSDYVKIVVAIVAGTITVILVIFITAVVRCQQSPHLKAAQKNKQNSEWVTPNPENRQMIMMKKKKKKKKKHAPKNLLLNFVTIEEAKADGADNNRSSITLDLPIELEEQTMGKYNWGTTPTTFKPDSADLARHYKSASPQPTFQIQPETPLNSKHHIIQELPLDNTFVGCDSISKCSSSSSDPYSVSECSYPVTTFKTPVSVHTRPPMKEAIRFHTPMKETTTVEIWTHPQPQRKSEGKRAGKSQRRVTFHLPEGSQESSSDGGLGDHDTGSLPSTSHALPLGYPQEEYFDHAAPNNRTEGDGNSDPESGK.

The signal sequence occupies residues 1–23; sequence MDLLSGTHIFAVLLACIVFQSGA. The Extracellular portion of the chain corresponds to 24–812; sequence QEKNYTIREE…ASSPSSDYVK (789 aa). Residues N27 and N48 are each glycosylated (N-linked (GlcNAc...) asparagine). 7 Cadherin domains span residues 27–139, 140–249, 250–355, 362–466, 467–570, 571–673, and 677–795; these read NYTI…APLF, PATV…RPVF, KENE…IPSI, NPIN…APVF, TQPF…SPVF, THNE…KPVF, and SSNY…TPVT. The N-linked (GlcNAc...) asparagine glycan is linked to N344. The N-linked (GlcNAc...) asparagine glycan is linked to N553. The chain crosses the membrane as a helical span at residues 813–833; sequence IVVAIVAGTITVILVIFITAV. At 834–1117 the chain is on the cytoplasmic side; the sequence is VRCQQSPHLK…DGNSDPESGK (284 aa). The span at 1029 to 1039 shows a compositional bias: polar residues; that stretch reads TVEIWTHPQPQ. The segment at 1029–1117 is disordered; it reads TVEIWTHPQP…DGNSDPESGK (89 aa).

Expressed in adrenal gland, brain, heart, kidney, lung, prostate, skeletal muscle, testis and thymus.

The protein localises to the cell membrane. In terms of biological role, potential calcium-dependent cell-adhesion protein. The chain is Protocadherin-11 X-linked (PCDH11X) from Sus scrofa (Pig).